Here is a 659-residue protein sequence, read N- to C-terminus: ATP-binding cassette sub-family D member 3 (659 aa).

The segment at 1–61 is interaction with PEX19; sequence MAAFSKYLTA…GKKERAVVDK (61 aa). The N-linked (GlcNAc...) asparagine glycan is linked to N12. K61 is subject to N6-acetyllysine. The chain crosses the membrane as a helical span at residues 84–104; sequence GYLVLIAVMLVSRTYCDVWMI. An ABC transmembrane type-1 domain is found at 85-372; the sequence is YLVLIAVMLV…MLLRMSQALG (288 aa). A glycan (N-linked (GlcNAc...) asparagine) is linked at N106. A helical transmembrane segment spans residues 126–146; sequence LLNFIAAMPLISLVNNFLKYG. N206 carries N-linked (GlcNAc...) asparagine glycosylation. A helical transmembrane segment spans residues 224 to 244; sequence AIGAQGPASMMAYLVVSGLFL. Residue K260 is modified to N6-acetyllysine. The helical transmembrane segment at 313–333 threads the bilayer; sequence MGFIDSIIAKYLATVVGYLVV. Position 399 is an N6-acetyllysine (K399). In terms of domain architecture, ABC transporter spans 440–659; it reads IKFDHVPLAT…ITEDTVEFGS (220 aa). 473–480 serves as a coordination point for ATP; the sequence is GPNGCGKS. N6-acetyllysine is present on K533. S659 carries the phosphoserine modification.

The protein belongs to the ABC transporter superfamily. ABCD family. Peroxisomal fatty acyl CoA transporter (TC 3.A.1.203) subfamily. Homodimers. Can form heterodimers with ABCD1 and ABCD2. Dimerization is necessary to form an active transporter. Interacts with PEX19; mediates the targeting of ABCD3 to peroxisomes. Ubiquitinated by PEX2 during pexophagy in response to starvation, leading to its degradation.

It is found in the peroxisome membrane. The catalysed reaction is a very long-chain fatty acyl-CoA + H2O = a very long-chain fatty acid + CoA + H(+). It carries out the reaction a very long-chain fatty acid(in) + ATP + H2O = a very long-chain fatty acid(out) + ADP + phosphate + H(+). It catalyses the reaction a long-chain fatty acyl-CoA + H2O = a long-chain fatty acid + CoA + H(+). The enzyme catalyses a long-chain fatty acid(in) + ATP + H2O = a long-chain fatty acid(out) + ADP + phosphate + H(+). The catalysed reaction is pristanoyl-CoA + H2O = 2,6,10,14-tetramethylpentadecanoate + CoA + H(+). It carries out the reaction 2,6,10,14-tetramethylpentadecanoate(in) + ATP + H2O = 2,6,10,14-tetramethylpentadecanoate(out) + ADP + phosphate + H(+). It catalyses the reaction hexadecanedioyl-CoA + H2O = hexadecanedioate + CoA + H(+). The enzyme catalyses hexadecanedioate(in) + ATP + H2O = hexadecanedioate(out) + ADP + phosphate + H(+). The catalysed reaction is (5Z,8Z,11Z,14Z,17Z)-eicosapentaenoyl-CoA + H2O = (5Z,8Z,11Z,14Z,17Z)-eicosapentaenoate + CoA + H(+). It carries out the reaction (5Z,8Z,11Z,14Z,17Z)-eicosapentaenoate(in) + ATP + H2O = (5Z,8Z,11Z,14Z,17Z)-eicosapentaenoate(out) + ADP + phosphate + H(+). It catalyses the reaction (4Z,7Z,10Z,13Z,16Z,19Z)-docosahexaenoyl-CoA + H2O = (4Z,7Z,10Z,13Z,16Z,19Z)-docosahexaenoate + CoA + H(+). The enzyme catalyses (4Z,7Z,10Z,13Z,16Z,19Z)-docosahexaenoate(in) + ATP + H2O = (4Z,7Z,10Z,13Z,16Z,19Z)-docosahexaenoate(out) + ADP + phosphate + H(+). Broad substrate specificity ATP-dependent transporter of the ATP-binding cassette (ABC) family that catalyzes the transport of long-chain fatty acids (LCFA)-CoA, dicarboxylic acids-CoA, long-branched-chain fatty acids-CoA and bile acids from the cytosol to the peroxisome lumen for beta-oxydation. Has fatty acyl-CoA thioesterase and ATPase activities. Probably hydrolyzes fatty acyl-CoAs into free fatty acids prior to their ATP-dependent transport into peroxisomes. Thus, play a role in regulation of LCFAs and energy metabolism namely, in the degradation and biosynthesis of fatty acids by beta-oxidation. The protein is ATP-binding cassette sub-family D member 3 of Homo sapiens (Human).